A 453-amino-acid chain; its full sequence is UDP-N-acetylmuramoylalanine--D-glutamate ligase (453 aa).

117–123 serves as a coordination point for ATP; the sequence is GANGKST.

It belongs to the MurCDEF family.

The protein resides in the cytoplasm. It carries out the reaction UDP-N-acetyl-alpha-D-muramoyl-L-alanine + D-glutamate + ATP = UDP-N-acetyl-alpha-D-muramoyl-L-alanyl-D-glutamate + ADP + phosphate + H(+). It participates in cell wall biogenesis; peptidoglycan biosynthesis. Cell wall formation. Catalyzes the addition of glutamate to the nucleotide precursor UDP-N-acetylmuramoyl-L-alanine (UMA). This is UDP-N-acetylmuramoylalanine--D-glutamate ligase from Methylobacillus flagellatus (strain ATCC 51484 / DSM 6875 / VKM B-1610 / KT).